The chain runs to 502 residues: Biotin biosynthesis bifunctional protein BioHC (502 aa).

The interval 1 to 224 (MTRPVLVLVH…IHVIAGSAHA (224 aa)) is carboxylesterase. W12 contributes to the substrate binding site. S72 acts as the Nucleophile in catalysis. 134-138 (FTGLL) is a substrate binding site. Active-site residues include D195 and H223. H223 provides a ligand contact to substrate. The interval 225 to 502 (VHWSQPQQLI…EVYYLVLCKP (278 aa)) is malonyl-ACP O-methyltransferase.

It in the N-terminal section; belongs to the AB hydrolase superfamily. Carboxylesterase BioH family. This sequence in the C-terminal section; belongs to the methyltransferase superfamily.

The enzyme catalyses a carboxylic ester + H2O = an alcohol + a carboxylate + H(+). It catalyses the reaction malonyl-[ACP] + S-adenosyl-L-methionine = malonyl-[ACP] methyl ester + S-adenosyl-L-homocysteine. It functions in the pathway cofactor biosynthesis; biotin biosynthesis. In terms of biological role, converts the free carboxyl group of a malonyl-thioester to its methyl ester by transfer of a methyl group from S-adenosyl-L-methionine (SAM). It allows to synthesize pimeloyl-ACP via the fatty acid synthetic pathway. Functionally, the physiological role of BioH is to remove the methyl group introduced by BioC when the pimeloyl moiety is complete. It allows to synthesize pimeloyl-ACP via the fatty acid synthetic pathway through the hydrolysis of the ester bonds of pimeloyl-ACP esters. The chain is Biotin biosynthesis bifunctional protein BioHC (bioC) from Cellvibrio japonicus (strain Ueda107) (Pseudomonas fluorescens subsp. cellulosa).